The primary structure comprises 92 residues: Acylphosphatase (92 aa).

The Acylphosphatase-like domain maps to 5 to 92; that stretch reads GVTIYVYGRV…EDIADFIVRH (88 aa). Active-site residues include arginine 20 and asparagine 38.

This sequence belongs to the acylphosphatase family.

It catalyses the reaction an acyl phosphate + H2O = a carboxylate + phosphate + H(+). This chain is Acylphosphatase (acyP), found in Photorhabdus laumondii subsp. laumondii (strain DSM 15139 / CIP 105565 / TT01) (Photorhabdus luminescens subsp. laumondii).